We begin with the raw amino-acid sequence, 258 residues long: Short-chain dehydrogenase/reductase FrzI (258 aa).

Residues Ile21, Asn41, and Asn94 each contribute to the NADP(+) site. Catalysis depends on proton donor residues Ser143 and Ser144. Residues Tyr157, Lys161, Val191, and Thr193 each contribute to the NADP(+) site. The Proton acceptor role is filled by Tyr157. Catalysis depends on Lys161, which acts as the Lowers pKa of active site Tyr.

Belongs to the short-chain dehydrogenases/reductases (SDR) family.

The catalysed reaction is (1S,3S,6S,7S,8R)-7-hydroxy-6-[(4-methoxyphenyl)methyl]-3-(methylamino)-5-azatricyclo[6.3.1.0(1,5)]dodecan-9-one + NADPH + H(+) = (1S,3S,6S,7S,8S,9S)-6-[(4-methoxyphenyl)methyl]-3-(methylamino)-5-azatricyclo[6.3.1.0(1,5)]dodecane-7,9-diol + NADP(+). The protein operates within secondary metabolite biosynthesis. Short-chain dehydrogenase/reductase; part of the gene cluster that mediates the biosynthesis of the alkaloid (-)-FR901483, a potent immunosuppressant that shows efficacy in animal models and a probable inhibitor of purine nucleotide biosynthesis by targeting phosphoribosylpyrophosphate amidotransferase (PPAT). Within the pathway, FrzI catalyzes the formation of dephospho-(-)-FR901483 from the aza-tricyclic intermediate produced by FrzH. The biosynthesis of (-)-FR901483 starts with the condensation of two L-tyrosines to yield (S,S)-dityrosyl-piperazine. This process occurs in 3 steps with the non-canonical nonribosomal peptide synthetase FrzA catalyzing the reduction of L-tyrosine into L-tyrosinal, the spontaneous condensation of 2 L-tyrosinal units, and the subsequent reduction by the NmrA-like family domain-containing oxidoreductase FrzB. The cytochrome P450 monooxygenase FrzC then performs coupling between N10 and C1' to morph the piperazine into a 1,4-diazabicyclo[3.2.1]octane spiro-fused to a 2,5-cyclohexadienone. The dienone portion is further reduced to cyclohexanone by the flavin-dependent reductase FrzD. The methyltranserases (MTs) FrzE and FrzF are then involved in the methylation at the C10' amine and the C4 phenolic oxygen, respectively. The order of the two MTs appear to be interchangeable. Cleavage of the C9-N10' bond by the dioxygenase FrzG then leads to formation of a conjugated iminium. In addition to the oxidation of C9, an additional dehydrogenation between C7 and C8 can occur to give a likely shunt product. The next biosynthetic step is the intramolecular aldol condensation catalyzed by the newly identified aldolase FrzH to yield an aza-tricyclic product with the formation of a C9-C3' bond. The short-chain dehydrogenase/reductase FrzI then produces dephospho-(-)-FR901483 that is phosphorylated at C4'-OH into (-)-FR901483 by the phosphotransferase FrzJ. This Cladobotryum sp protein is Short-chain dehydrogenase/reductase FrzI.